A 448-amino-acid chain; its full sequence is Ribosomal protein uS12 methylthiotransferase RimO (448 aa).

The 111-residue stretch at 16–126 folds into the MTTase N-terminal domain; that stretch reads PKISFVSLGC…VVAAVHEAVP (111 aa). Cys-25, Cys-61, Cys-90, Cys-157, Cys-161, and Cys-164 together coordinate [4Fe-4S] cluster. The region spanning 143-380 is the Radical SAM core domain; sequence LTPRHYAYLK…METQNGIALR (238 aa). The 66-residue stretch at 383–448 folds into the TRAM domain; that stretch reads RAKVGKRLPV…EAYDLYGSVA (66 aa).

The protein belongs to the methylthiotransferase family. RimO subfamily. The cofactor is [4Fe-4S] cluster.

Its subcellular location is the cytoplasm. It catalyses the reaction L-aspartate(89)-[ribosomal protein uS12]-hydrogen + (sulfur carrier)-SH + AH2 + 2 S-adenosyl-L-methionine = 3-methylsulfanyl-L-aspartate(89)-[ribosomal protein uS12]-hydrogen + (sulfur carrier)-H + 5'-deoxyadenosine + L-methionine + A + S-adenosyl-L-homocysteine + 2 H(+). In terms of biological role, catalyzes the methylthiolation of an aspartic acid residue of ribosomal protein uS12. The protein is Ribosomal protein uS12 methylthiotransferase RimO of Methylobacterium radiotolerans (strain ATCC 27329 / DSM 1819 / JCM 2831 / NBRC 15690 / NCIMB 10815 / 0-1).